Reading from the N-terminus, the 44-residue chain is Defensin heliomicin (44 aa).

3 disulfide bridges follow: Cys7–Cys32, Cys18–Cys40, and Cys22–Cys42.

The protein localises to the secreted. This peptide has potent anti-fungal activity. Has no activity against Gram-negative and Gram-positive bacteria. The protein is Defensin heliomicin of Heliothis virescens (Tobacco budworm moth).